The following is a 540-amino-acid chain: Glucose-6-phosphate isomerase (540 aa).

The Proton donor role is filled by Glu-350. Catalysis depends on residues His-381 and Lys-503.

Belongs to the GPI family.

The protein localises to the cytoplasm. It carries out the reaction alpha-D-glucose 6-phosphate = beta-D-fructose 6-phosphate. It participates in carbohydrate biosynthesis; gluconeogenesis. It functions in the pathway carbohydrate degradation; glycolysis; D-glyceraldehyde 3-phosphate and glycerone phosphate from D-glucose: step 2/4. Functionally, catalyzes the reversible isomerization of glucose-6-phosphate to fructose-6-phosphate. The sequence is that of Glucose-6-phosphate isomerase from Burkholderia pseudomallei (strain 1106a).